The chain runs to 422 residues: Keratin, type II cytoskeletal 80 (422 aa).

A head region spans residues 1–82; the sequence is MACRSCVVGF…DPAIQQQKNN (82 aa). Ser45 is subject to Phosphoserine. Residues 83–118 are coil 1A; that stretch reads EKEEMKVLNDKFASLIGKVQALEQRNQLLETRWHFL. In terms of domain architecture, IF rod spans 83–394; that stretch reads EKEEMKVLND…KLMEGEESRM (312 aa). Positions 119-135 are linker 1; that stretch reads QSQDSATFDLGHLYEEY. The interval 136 to 227 is coil 1B; that stretch reads QGRLQEELRK…SIYEQELKDL (92 aa). The interval 228–251 is linker 12; that stretch reads AAQLKDVSVTVGMDSRCHIDLSGI. The tract at residues 252-390 is coil 2; it reads VEEVKAQYDA…ATYRKLMEGE (139 aa). A tail region spans residues 391-422; sequence ESRMDMPSATVVSAVQARCRTAPTLPHPLCSL.

The protein belongs to the intermediate filament family. As to quaternary structure, heterotetramer of two type I and two type II keratins.

The protein is Keratin, type II cytoskeletal 80 (KRT80) of Bos taurus (Bovine).